Here is a 197-residue protein sequence, read N- to C-terminus: ATP-dependent Clp protease proteolytic subunit (197 aa).

Catalysis depends on Ser97, which acts as the Nucleophile. His122 is a catalytic residue.

This sequence belongs to the peptidase S14 family. As to quaternary structure, fourteen ClpP subunits assemble into 2 heptameric rings which stack back to back to give a disk-like structure with a central cavity, resembling the structure of eukaryotic proteasomes.

The protein resides in the cytoplasm. It carries out the reaction Hydrolysis of proteins to small peptides in the presence of ATP and magnesium. alpha-casein is the usual test substrate. In the absence of ATP, only oligopeptides shorter than five residues are hydrolyzed (such as succinyl-Leu-Tyr-|-NHMec, and Leu-Tyr-Leu-|-Tyr-Trp, in which cleavage of the -Tyr-|-Leu- and -Tyr-|-Trp bonds also occurs).. Cleaves peptides in various proteins in a process that requires ATP hydrolysis. Has a chymotrypsin-like activity. Plays a major role in the degradation of misfolded proteins. The chain is ATP-dependent Clp protease proteolytic subunit from Trichlorobacter lovleyi (strain ATCC BAA-1151 / DSM 17278 / SZ) (Geobacter lovleyi).